Reading from the N-terminus, the 496-residue chain is Probable glycine betaine transporter (496 aa).

Helical transmembrane passes span 11-31 (TVLY…VFLP), 49-69 (FGWL…GIAI), 89-109 (FQWF…FWSV), 136-156 (VVFF…GLAL), 188-208 (AIDI…LGLG), 219-239 (IWGI…ITVI), 260-280 (VWLS…VFIL), 306-326 (WVGG…PFVG), 341-361 (FVFA…AIYG), 396-416 (LYAI…VGAA), 441-461 (FWGI…GTAA), and 468-488 (ASIA…YSIL).

This sequence belongs to the BCCT transporter (TC 2.A.15) family.

Its subcellular location is the cell membrane. Its function is as follows. Probably acts in the uptake of glycine betaine. May function in the pathway that allows anaerobic methylotrophic growth of D.hafniense using glycine betaine. The polypeptide is Probable glycine betaine transporter (Desulfitobacterium hafniense (strain Y51)).